Consider the following 22-residue polypeptide: Magnificalysin II (22 aa).

Residues 3–12 (ALAGTIIDGA) are plays an important role in the hemolytic activity. Residues 11–22 (GASLGFDILNKV) form an N-terminal region region.

The protein belongs to the actinoporin family. Sea anemone subfamily. Octamer or nonamer in membranes. Monomer in the soluble state.

It localises to the secreted. The protein resides in the nematocyst. The protein localises to the target cell membrane. Pore-forming protein that forms cations-selective hydrophilic pores of around 1 nm and causes cytolysis. Pore formation is a multi-step process that involves specific recognition of membrane sphingomyelin (but neither cholesterol nor phosphatidylcholine) using aromatic rich region and adjacent phosphocholine (POC) binding site, firm binding to the membrane (mainly driven by hydrophobic interactions) accompanied by the transfer of the N-terminal region to the lipid-water interface and finally pore formation after oligomerization of monomers. In Heteractis magnifica (Magnificent sea anemone), this protein is Magnificalysin II.